We begin with the raw amino-acid sequence, 130 residues long: Small ribosomal subunit protein uS8 (130 aa).

The protein belongs to the universal ribosomal protein uS8 family. In terms of assembly, part of the 30S ribosomal subunit. Contacts proteins S5 and S12.

One of the primary rRNA binding proteins, it binds directly to 16S rRNA central domain where it helps coordinate assembly of the platform of the 30S subunit. The sequence is that of Small ribosomal subunit protein uS8 from Pseudomonas syringae pv. tomato (strain ATCC BAA-871 / DC3000).